The sequence spans 434 residues: Putative DD-carboxypeptidase TP_0574 (434 aa).

The first 19 residues, 1 to 19 (MKVKYALLSAGALQLLVVG), serve as a signal peptide directing secretion. Cysteine 20 carries N-palmitoyl cysteine lipidation. A lipid anchor (S-diacylglycerol cysteine) is attached at cysteine 20.

Probably a monomer; a non-lipidated construct (residues 22-434) is monomeric in solution but crystallizes as a homodimer. The cofactor is Zn(2+). In terms of processing, the N-terminus is blocked. Present as a doublet of low abundance 48 kDa and high abundance 47 kDa proteins. The longer form is probably due to readthrough of the stop codon; the extra amino acids at the C-terminus would be X-Lys-Arg-Gly-Val-Leu-Ser-Arg-Val-Ser, a peptide antibody against this sequence detects only the 48 kDa form.

The protein resides in the cell inner membrane. Its function is as follows. A possible D,D-carboxypeptidase, that releases amino acids sequentially from a proteins C-terminus. Has zinc-dependent carboxypeptidase activity on synthetic depsipeptide substrates. May serve to decrease cross-linking of peptidoglycan, promoting the highly sinusous motility of this spirochaete. Overexpression of the whole protein in E.coli leads to aberrant cell morphology and extrusion of the cytoplasm, while overexpression of a construct with the first 62 resides of the protein fused to PhoA does have this effect, suggesting the whole protein, not the lipoprotein moiety, is toxic. Binds penicillin. Penicillin binding is covalent, does not require lipidation, and is zinc-dependent. While this protein has beta-lactamase activity in vitro, that is probably not its role in vivo, as T.pallidum is very sensitive to penicillin antibiotics. In terms of biological role, a pathogen-specific membrane antigen. Most abundant of the membrane lipoproteins, only found in pathogenic treponemes, suggesting that it is an important structural moiety in the cell envelope of virulent treponemal subspecies. A lipopeptide corresponding to the first 6 mature residues induces host (human and mouse) cytokine release by monocyte cell lines via TLR2 and CD14; nonlipidated protein does not stimulate host cells. Stimulates host (human) dendritic cell maturation to become MHC class II-positive antigen presenting cells via TLR2, which depends on lipidation; nonlipidated protein does not stimulate maturation. The protein is Putative DD-carboxypeptidase TP_0574 of Treponema pallidum (strain Nichols).